The following is a 114-amino-acid chain: T cell receptor alpha variable 3 (114 aa).

A signal peptide spans 1-20 (MASAPISMLAMLFTLSGLRA). One can recognise an Ig-like domain in the interval 21–114 (QSVAQPEDQV…SALYFCAVRD (94 aa)). Cys42 and Cys110 form a disulfide bridge. The N-linked (GlcNAc...) asparagine glycan is linked to Asn87.

As to quaternary structure, alpha-beta TR is a heterodimer composed of an alpha and beta chain; disulfide-linked. The alpha-beta TR is associated with the transmembrane signaling CD3 coreceptor proteins to form the TR-CD3 (TcR or TCR). The assembly of alpha-beta TR heterodimers with CD3 occurs in the endoplasmic reticulum where a single alpha-beta TR heterodimer associates with one CD3D-CD3E heterodimer, one CD3G-CD3E heterodimer and one CD247 homodimer forming a stable octameric structure. CD3D-CD3E and CD3G-CD3E heterodimers preferentially associate with TR alpha and TR beta chains, respectively. The association of the CD247 homodimer is the last step of TcR assembly in the endoplasmic reticulum and is required for transport to the cell surface.

The protein resides in the cell membrane. Functionally, v region of the variable domain of T cell receptor (TR) alpha chain that participates in the antigen recognition. Alpha-beta T cell receptors are antigen specific receptors which are essential to the immune response and are present on the cell surface of T lymphocytes. Recognize peptide-major histocompatibility (MH) (pMH) complexes that are displayed by antigen presenting cells (APC), a prerequisite for efficient T cell adaptive immunity against pathogens. Binding of alpha-beta TR to pMH complex initiates TR-CD3 clustering on the cell surface and intracellular activation of LCK that phosphorylates the ITAM motifs of CD3G, CD3D, CD3E and CD247 enabling the recruitment of ZAP70. In turn ZAP70 phosphorylates LAT, which recruits numerous signaling molecules to form the LAT signalosome. The LAT signalosome propagates signal branching to three major signaling pathways, the calcium, the mitogen-activated protein kinase (MAPK) kinase and the nuclear factor NF-kappa-B (NF-kB) pathways, leading to the mobilization of transcription factors that are critical for gene expression and essential for T cell growth and differentiation. The T cell repertoire is generated in the thymus, by V-(D)-J rearrangement. This repertoire is then shaped by intrathymic selection events to generate a peripheral T cell pool of self-MH restricted, non-autoaggressive T cells. Post-thymic interaction of alpha-beta TR with the pMH complexes shapes TR structural and functional avidity. The protein is T cell receptor alpha variable 3 of Homo sapiens (Human).